We begin with the raw amino-acid sequence, 675 residues long: MTTSHMNGHVTEESDSEVKNVDLASPEEHQKHREMAVDCPGDLGTRMMPIRRSAQLERIRQQQEDMRRRREEEGKKQELDLNSSMRLKKLAQIPPKTGIDNPMFDTEEGIVLESPHYAVKILEIEDLFSSLKHIQHTLVDSQSQEDISLLLQLVQNKDFQNAFKIHNAITVHMNKASPPFPLISNAQDLAQEVQTVLKPVHHKEGQELTALLNTPHIQALLLAHDKVAEQEMQLEPITDERVYESIGQYGGETVKIVRIEKARDIPLGATVRNEMDSVIISRIVKGGAAEKSGLLHEGDEVLEINGIEIRGKDVNEVFDLLSDMHGTLTFVLIPSQQIKPPPAKETVIHVKAHFDYDPSDDPYVPCRELGLSFQKGDILHVISQEDPNWWQAYREGDEDNQPLAGLVPGKSFQQQREAMKQTIEEDKEPEKSGKLWCAKKNKKKRKKVLYNANKNDDYDNEEILTYEEMSLYHQPANRKRPIILIGPQNCGQNELRQRLMNKEKDRFASAVPHTTRSRRDQEVAGRDYHFVSRQAFEADIAAGKFIEHGEFEKNLYGTSIDSVRQVINSGKICLLSLRTQSLKTLRNSDLKPYIIFIAPPSQERLRALLAKEGKNPKPEELREIIEKTREMEQNNGHYFDTAIVNSDLDKAYQELLRLINKLDTEPQWVPSTWLR.

2 disordered regions span residues 1–34 and 51–78; these read MTTS…KHRE and RRSA…KKQE. Residues 1 to 345 form a required for the correct localization of PALS1 and PATJ at cell-cell contacts and the normal formation of tight junctions and adherens junctions region; that stretch reads MTTSHMNGHV…QQIKPPPAKE (345 aa). Composition is skewed to basic and acidic residues over residues 10–34 and 54–78; these read VTEE…KHRE and AQLE…KKQE. A phosphoserine mark is found at Ser-14 and Ser-25. The interval 21–140 is interaction with PARD6B; sequence VDLASPEEHQ…LKHIQHTLVD (120 aa). Phosphoserine is present on residues Ser-83 and Ser-84. 2 L27 domains span residues 120–177 and 179–235; these read KILE…NKAS and PFPL…MQLE. Residues 181–243 form an interaction with LIN7C region; sequence PLISNAQDLA…LEPITDERVY (63 aa). Residues 256-336 form the PDZ domain; sequence IVRIEKARDI…TLTFVLIPSQ (81 aa). The region spanning 345-417 is the SH3 domain; that stretch reads ETVIHVKAHF…PGKSFQQQRE (73 aa). A Guanylate kinase-like domain is found at 479–660; it reads KRPIILIGPQ…AYQELLRLIN (182 aa). ATP is bound at residue 486–493; sequence GPQNCGQN.

This sequence belongs to the MAGUK family. As to quaternary structure, heterodimer with MPP1. Forms a heterotrimeric complex composed of PALS1, LIN7B and PATJ; the N-terminal L27 domain of PALS1 interacts with the L27 domain of PATJ and the C-terminal L27 domain of PALS1 interacts with the L27 domain of LIN7B. Component of a complex composed of PALS1, CRB1 and MPP4. Component of a complex whose core is composed of ARHGAP17, AMOT, PALS1, PATJ and PARD3/PAR3. Component of a complex composed of PALS1, CRB1 and EPB41L5. Within the complex, interacts (via HOOK domain) with EPB41L5 (via FERM domain), and interacts with CRB1 (via intracellular domain). Component of a complex composed of PALS1, MPP3 and CRB1; PALS1 acts as a bridging protein between MPP3 (via guanylate kinase-like domain) and CRB1. Component of a complex composed of CRB3, PALS1 and PATJ. As part of the Crumbs complex; interacts with WWP1, the interaction is enhanced by AMOTL2 and facilitates WWP1 localization to the plasma membrane. The Crumbs complex promotes monoubiquitination of AMOTL2 by WWP1, which activates the Hippo signaling pathway. Interacts (via PDZ domain) with PATJ (via N-terminus). Interacts with EZR. Interacts (via PDZ domain) with CRB1 (via C-terminal ERLI motif). While the PDZ domain is sufficient for interaction with CRB1, the adjacent SH3 and guanylate kinase-like domains are likely to contribute to a high affinity interaction. Interacts with WWTR1/TAZ (via WW domain). Interacts with MPP7. Interacts (via PDZ domain) with CRB3 (via C-terminus). Interacts with LIN7C. Interacts with MPDZ. Interacts with PARD6B. Interacts with SC6A1. Interacts with CDH5; the interaction promotes PALS1 localization to cell junctions and is required for CDH5-mediated vascular lumen formation and endothelial cell. Interacts with NPHP1 (via coiled coil and SH3 domains). Interacts with NPHP4. Interacts with CRB2. (Microbial infection) Interacts (via PDZ domain) with human coronaviruses SARS-CoV and, probably, SARS-CoV-2 envelope small membrane protein E (via C-terminus); this inhibits the interaction between PALS1 and CRB3. In terms of tissue distribution, expressed at the outer limiting membrane in the retina (at protein level). Expressed in T lymphocytes (at protein level). Expressed in the kidney (at protein level).

It localises to the golgi apparatus. The protein localises to the cell membrane. Its subcellular location is the endomembrane system. It is found in the cell junction. The protein resides in the tight junction. It localises to the adherens junction. The protein localises to the cell projection. Its subcellular location is the axon. It is found in the perikaryon. The protein resides in the apical cell membrane. It localises to the endoplasmic reticulum-Golgi intermediate compartment. In terms of biological role, plays a role in tight junction biogenesis and in the establishment of cell polarity in epithelial cells. Also involved in adherens junction biogenesis by ensuring correct localization of the exocyst complex protein EXOC4/SEC8 which allows trafficking of adherens junction structural component CDH1 to the cell surface. Plays a role through its interaction with CDH5 in vascular lumen formation and endothelial membrane polarity. Required during embryonic and postnatal retinal development. Required for the maintenance of cerebellar progenitor cells in an undifferentiated proliferative state, preventing premature differentiation, and is required for cerebellar histogenesis, fissure formation, cerebellar layer organization and cortical development. Plays a role in neuronal progenitor cell survival, potentially via promotion of mTOR signaling. Plays a role in the radial and longitudinal extension of the myelin sheath in Schwann cells. May modulate SC6A1/GAT1-mediated GABA uptake by stabilizing the transporter. Plays a role in the T-cell receptor-mediated activation of NF-kappa-B. Required for localization of EZR to the apical membrane of parietal cells and may play a role in the dynamic remodeling of the apical cytoskeleton. Required for the normal polarized localization of the vesicular marker STX4. Required for the correct trafficking of the myelin proteins PMP22 and MAG. Involved in promoting phosphorylation and cytoplasmic retention of transcriptional coactivators YAP1 and WWTR1/TAZ which leads to suppression of TGFB1-dependent transcription of target genes such as CCN2/CTGF, SERPINE1/PAI1, SNAI1/SNAIL1 and SMAD7. Its function is as follows. (Microbial infection) Acts as an interaction partner for human coronaviruses SARS-CoV and, probably, SARS-CoV-2 envelope protein E which results in delayed formation of tight junctions and disregulation of cell polarity. This Homo sapiens (Human) protein is Protein PALS1.